The sequence spans 136 residues: Protein PsiE homolog (136 aa).

4 consecutive transmembrane segments (helical) span residues 15 to 35 (AMQAVLNLALLCLGIILVVFL), 58 to 78 (VEGLVVYFLYFEFIALIVKYF), 82 to 102 (FHFPLRYFVYIGITAIVRLII), and 108 to 128 (PLAVLIYSAAILILVITLWLC).

It belongs to the PsiE family.

The protein resides in the cell inner membrane. The sequence is that of Protein PsiE homolog from Klebsiella pneumoniae subsp. pneumoniae (strain ATCC 700721 / MGH 78578).